Here is a 317-residue protein sequence, read N- to C-terminus: Glycine--tRNA ligase alpha subunit (317 aa).

Belongs to the class-II aminoacyl-tRNA synthetase family. As to quaternary structure, tetramer of two alpha and two beta subunits.

It is found in the cytoplasm. It carries out the reaction tRNA(Gly) + glycine + ATP = glycyl-tRNA(Gly) + AMP + diphosphate. This is Glycine--tRNA ligase alpha subunit from Acidovorax ebreus (strain TPSY) (Diaphorobacter sp. (strain TPSY)).